A 184-amino-acid chain; its full sequence is Copper transporter 6 (184 aa).

Residues 1–25 (MRGMGDDGMGPMAMAPPRSGHATAA) are compositionally biased toward low complexity. Residues 1 to 27 (MRGMGDDGMGPMAMAPPRSGHATAAAP) are disordered. The next 2 helical transmembrane spans lie at 64-84 (YALC…LSVL) and 124-144 (MAYL…LAAV).

This sequence belongs to the copper transporter (Ctr) (TC 1.A.56) family. SLC31A subfamily.

It localises to the membrane. Involved in the transport of copper. The chain is Copper transporter 6 (COPT6) from Oryza sativa subsp. japonica (Rice).